The sequence spans 170 residues: Double homeobox protein 1 (170 aa).

2 consecutive DNA-binding regions (homeobox) follow at residues 19–78 (GRRM…LRQH) and 94–153 (GRRK…RGQS). Positions 75–100 (LRQHRRQSRPWPGRRDPQKGRRKRTA) are disordered.

Belongs to the paired homeobox family. In terms of tissue distribution, expressed in rhabdomyosarcoma TE671 cells as well as in several other normal and cancer cells.

It is found in the nucleus. Functionally, probable transcription activator. Binds the P5 DNA element sequence 5'-GATCTGAGTCTAATTGAGAATTACTGTAC-3'. This chain is Double homeobox protein 1 (DUX1), found in Homo sapiens (Human).